Here is a 144-residue protein sequence, read N- to C-terminus: Cytochrome c oxidase subunit 4 isoform 1, mitochondrial (144 aa).

Topologically, residues 1–73 (SVVKSEDFTL…SFAEMNRRSN (73 aa)) are mitochondrial matrix. At K4 the chain carries N6-acetyllysine; alternate. An N6-succinyllysine; alternate modification is found at K4. At K28 the chain carries N6-acetyllysine. 2 positions are modified to phosphoserine: S31 and S33. K35 bears the N6-acetyllysine; alternate mark. Residue K35 is modified to N6-succinyllysine; alternate. N6-acetyllysine is present on K42. Residues 74–99 (EWKTVVGTAMFFFGITALIVMWEKRY) traverse the membrane as a helical segment. Residues 100 to 144 (VYGPLPQTFDKEWVAMQTKRMLDMKVNPIQGLASKWDYEKNEWKK) are Mitochondrial intermembrane-facing.

It belongs to the cytochrome c oxidase IV family. In terms of assembly, component of the cytochrome c oxidase (complex IV, CIV), a multisubunit enzyme composed of 14 subunits. The complex is composed of a catalytic core of 3 subunits MT-CO1, MT-CO2 and MT-CO3, encoded in the mitochondrial DNA, and 11 supernumerary subunits COX4I, COX5A, COX5B, COX6A, COX6B, COX6C, COX7A, COX7B, COX7C, COX8 and NDUFA4, which are encoded in the nuclear genome. The complex exists as a monomer or a dimer and forms supercomplexes (SCs) in the inner mitochondrial membrane with NADH-ubiquinone oxidoreductase (complex I, CI) and ubiquinol-cytochrome c oxidoreductase (cytochrome b-c1 complex, complex III, CIII), resulting in different assemblies (supercomplex SCI(1)III(2)IV(1) and megacomplex MCI(2)III(2)IV(2)). Interacts with PHB2; the interaction decreases in absence of SPHK2. Interacts with AFG1L. Interacts with ABCB7; this interaction allows the regulation of cellular iron homeostasis and cellular reactive oxygen species (ROS) levels in cardiomyocytes. Interacts with FLVCR2; this interaction occurs in the absence of heme and is disrupted upon heme binding. Interacts with IRGC.

It localises to the mitochondrion inner membrane. Its pathway is energy metabolism; oxidative phosphorylation. Component of the cytochrome c oxidase, the last enzyme in the mitochondrial electron transport chain which drives oxidative phosphorylation. The respiratory chain contains 3 multisubunit complexes succinate dehydrogenase (complex II, CII), ubiquinol-cytochrome c oxidoreductase (cytochrome b-c1 complex, complex III, CIII) and cytochrome c oxidase (complex IV, CIV), that cooperate to transfer electrons derived from NADH and succinate to molecular oxygen, creating an electrochemical gradient over the inner membrane that drives transmembrane transport and the ATP synthase. Cytochrome c oxidase is the component of the respiratory chain that catalyzes the reduction of oxygen to water. Electrons originating from reduced cytochrome c in the intermembrane space (IMS) are transferred via the dinuclear copper A center (CU(A)) of subunit 2 and heme A of subunit 1 to the active site in subunit 1, a binuclear center (BNC) formed by heme A3 and copper B (CU(B)). The BNC reduces molecular oxygen to 2 water molecules using 4 electrons from cytochrome c in the IMS and 4 protons from the mitochondrial matrix. This is Cytochrome c oxidase subunit 4 isoform 1, mitochondrial (COX4I1) from Theropithecus gelada (Gelada baboon).